Consider the following 410-residue polypeptide: Cysteine desulfurase IscS (410 aa).

Pyridoxal 5'-phosphate-binding positions include 80-81 (AT), N160, Q188, and 208-210 (SGH). Residue K211 is modified to N6-(pyridoxal phosphate)lysine. Pyridoxal 5'-phosphate is bound at residue T248. C334 functions as the Cysteine persulfide intermediate in the catalytic mechanism. C334 is a binding site for [2Fe-2S] cluster.

It belongs to the class-V pyridoxal-phosphate-dependent aminotransferase family. NifS/IscS subfamily. Homodimer. Forms a heterotetramer with IscU, interacts with other sulfur acceptors. Pyridoxal 5'-phosphate is required as a cofactor.

The protein resides in the cytoplasm. It carries out the reaction (sulfur carrier)-H + L-cysteine = (sulfur carrier)-SH + L-alanine. The protein operates within cofactor biosynthesis; iron-sulfur cluster biosynthesis. Master enzyme that delivers sulfur to a number of partners involved in Fe-S cluster assembly, tRNA modification or cofactor biosynthesis. Catalyzes the removal of elemental sulfur atoms from cysteine to produce alanine. Functions as a sulfur delivery protein for Fe-S cluster synthesis onto IscU, an Fe-S scaffold assembly protein, as well as other S acceptor proteins. In Rickettsia africae (strain ESF-5), this protein is Cysteine desulfurase IscS.